We begin with the raw amino-acid sequence, 313 residues long: Cytochrome f (313 aa).

A signal peptide spans Met1–Ala31. The heme site is built by Tyr32, Cys52, Cys55, and His56. Residues Ile279–Leu298 traverse the membrane as a helical segment.

The protein belongs to the cytochrome f family. As to quaternary structure, the 4 large subunits of the cytochrome b6-f complex are cytochrome b6, subunit IV (17 kDa polypeptide, petD), cytochrome f and the Rieske protein, while the 4 small subunits are PetG, PetL, PetM and PetN. The complex functions as a dimer. Heme is required as a cofactor.

It localises to the plastid. The protein localises to the chloroplast thylakoid membrane. In terms of biological role, component of the cytochrome b6-f complex, which mediates electron transfer between photosystem II (PSII) and photosystem I (PSI), cyclic electron flow around PSI, and state transitions. The protein is Cytochrome f (petA) of Mesostigma viride (Green alga).